The sequence spans 456 residues: Decaprenyl-diphosphate synthase (456 aa).

Residues Lys183, Arg186, and His216 each contribute to the isopentenyl diphosphate site. 2 residues coordinate Mg(2+): Asp223 and Asp227. Residue Arg233 coordinates isopentenyl diphosphate.

This sequence belongs to the FPP/GGPP synthase family. Mg(2+) serves as cofactor.

The protein resides in the mitochondrion. It carries out the reaction 7 isopentenyl diphosphate + (2E,6E)-farnesyl diphosphate = all-trans-decaprenyl diphosphate + 7 diphosphate. Its pathway is cofactor biosynthesis; ubiquinone biosynthesis. Functionally, supplies decaprenyl diphosphate, the precursor for the side chain of the isoprenoid quinones ubiquinone-10. The chain is Decaprenyl-diphosphate synthase (coq1) from Dictyostelium discoideum (Social amoeba).